The chain runs to 629 residues: Glycerol-3-phosphate dehydrogenase SDP6, mitochondrial (629 aa).

Residues 1-48 constitute a mitochondrion transit peptide; the sequence is MSLASIRRLAAGAAVIAAASGGAVYLSPSVASSDKGGGPILDSLRRRL. An FAD-binding site is contributed by 75–103; sequence DVLVIGGGATGSGVALDAVTRGLRVGLVE.

The protein belongs to the FAD-dependent glycerol-3-phosphate dehydrogenase family. The cofactor is FAD. In terms of tissue distribution, expressed in germinating seedlings. Also detected in roots, leaves, flowers, developing siliques and germinating seeds.

It is found in the mitochondrion inner membrane. It catalyses the reaction a quinone + sn-glycerol 3-phosphate = dihydroxyacetone phosphate + a quinol. It participates in polyol metabolism; glycerol degradation via glycerol kinase pathway; glycerone phosphate from sn-glycerol 3-phosphate (anaerobic route): step 1/1. In terms of biological role, required for glycerol catabolism and involved in NADH/NAD(+) homeostasis. Essential for postgerminative growth and seedling establishment. This chain is Glycerol-3-phosphate dehydrogenase SDP6, mitochondrial, found in Arabidopsis thaliana (Mouse-ear cress).